We begin with the raw amino-acid sequence, 529 residues long: Pre-rRNA-processing protein pro-1 (529 aa).

WD repeat units follow at residues 136 to 175 (AHYQ…SADR) and 287 to 326 (GHSD…CLKV). Positions 416-518 (ARNEAAKAEK…LKEINKQMYE (103 aa)) form a coiled coil. The interval 436–470 (TLGDDEDDAPEVGNQRRKSGKKNKKNRKNQKKNDF) is disordered. Residues 450–465 (QRRKSGKKNKKNRKNQ) show a composition bias toward basic residues.

Belongs to the WD repeat IPI3/WDR18 family. Component of the PELP1 complex, composed of at least PELP1, TEX10 and WDR18. The complex interacts with pre-60S ribosome particles.

The protein resides in the nucleus. Its subcellular location is the nucleolus. The protein localises to the nucleoplasm. Its function is as follows. Component of the PELP1 complex involved in the nucleolar steps of 28S rRNA maturation and the subsequent nucleoplasmic transit of the pre-60S ribosomal subunit. Required for processing ITS2 sequences from rRNA intermediates during 26S rRNA maturation. Required in the soma to promote normal proliferation and prevent germline tumor formation. The polypeptide is Pre-rRNA-processing protein pro-1 (Caenorhabditis elegans).